The following is a 304-amino-acid chain: Acetyl-coenzyme A carboxylase carboxyl transferase subunit beta (304 aa).

In terms of domain architecture, CoA carboxyltransferase N-terminal spans 25–294; it reads LWIKCPETGE…EAARRESGSQ (270 aa).

It belongs to the AccD/PCCB family. As to quaternary structure, acetyl-CoA carboxylase is a heterohexamer composed of biotin carboxyl carrier protein (AccB), biotin carboxylase (AccC) and two subunits each of ACCase subunit alpha (AccA) and ACCase subunit beta (AccD).

Its subcellular location is the cytoplasm. The enzyme catalyses N(6)-carboxybiotinyl-L-lysyl-[protein] + acetyl-CoA = N(6)-biotinyl-L-lysyl-[protein] + malonyl-CoA. It functions in the pathway lipid metabolism; malonyl-CoA biosynthesis; malonyl-CoA from acetyl-CoA: step 1/1. Its function is as follows. Component of the acetyl coenzyme A carboxylase (ACC) complex. Biotin carboxylase (BC) catalyzes the carboxylation of biotin on its carrier protein (BCCP) and then the CO(2) group is transferred by the transcarboxylase to acetyl-CoA to form malonyl-CoA. This Sinorhizobium fredii (strain NBRC 101917 / NGR234) protein is Acetyl-coenzyme A carboxylase carboxyl transferase subunit beta.